The primary structure comprises 210 residues: Somatotropin (210 aa).

The signal sequence occupies residues Met1 to Ala22. His38 contacts Zn(2+). A disulfide bridge connects residues Cys71 and Cys183. Position 192 (Glu192) interacts with Zn(2+). Cys200 and Cys208 form a disulfide bridge.

Belongs to the somatotropin/prolactin family.

It is found in the secreted. Functionally, growth hormone plays an important role in growth control and is involved in the regulation of several anabolic processes. Implicated as an osmoregulatory substance important for seawater adaptation. The polypeptide is Somatotropin (gh) (Oncorhynchus tshawytscha (Chinook salmon)).